Here is a 398-residue protein sequence, read N- to C-terminus: Calcium-binding and coiled-coil domain-containing protein 2 (398 aa).

Residues 133–136 (ILVV) carry the CLIR motif. Residues 137-301 (TTQGEVEEIE…RENSRLLSYM (165 aa)) adopt a coiled-coil conformation. Positions 203-206 (DYWE) match the LIR-like motif. A disordered region spans residues 314-341 (TSDEGGAGQNPGLVYGNPYSGIQESSSP). Residues 323-333 (NPGLVYGNPYS) are interaction with LGALS8. Residues 347–398 (KKCPICKADDICDHTLEQQQMQALCLNCPICDKIFPATEKQIFEDHVFCHSL) form an interaction with MYO6 region. The UBZ1-type zinc finger occupies 371–396 (CLNCPICDKIFPATEKQIFEDHVFCH). Positions 374, 377, 392, and 396 each coordinate Zn(2+). Phosphoserine is present on Ser-397.

It belongs to the CALCOCO family. In terms of assembly, dimer. Part of a complex consisting of CALCOCO2, TAX1BP1 and MYO6. Interacts with MYO6. Interacts with GEMIN4. Interacts with ATG8 family members MAP1LC3A, MAP1LC3B, GABARAP, GABARAPL1 and GABARAPL2. Interacts with ATG8 family member MAP1LC3C. Interacts with LGALS8. Interacts with TOM1; the interaction is indirect and is mediated by MYO6, which acts as a bridge between TOM1 and CALCOCO2. Interacts with AZI2.

Its subcellular location is the cytoplasm. It localises to the perinuclear region. The protein resides in the cytoskeleton. The protein localises to the cytoplasmic vesicle. It is found in the autophagosome membrane. In terms of biological role, xenophagy-specific receptor required for autophagy-mediated intracellular bacteria degradation. Acts as an effector protein of galectin-sensed membrane damage that restricts the proliferation of infecting pathogens upon entry into the cytosol by targeting LGALS8-associated bacteria for autophagy. Initially orchestrates bacteria targeting to autophagosomes and subsequently ensures pathogen degradation by regulating pathogen-containing autophagosome maturation. Bacteria targeting to autophagosomes relies on its interaction with MAP1LC3A, MAP1LC3B and/or GABARAPL2, whereas regulation of pathogen-containing autophagosome maturation requires the interaction with MAP3LC3C. May play a role in ruffle formation and actin cytoskeleton organization and seems to negatively regulate constitutive secretion. This Macaca fascicularis (Crab-eating macaque) protein is Calcium-binding and coiled-coil domain-containing protein 2.